A 305-amino-acid chain; its full sequence is Carbonic anhydrase 4 (305 aa).

The signal sequence occupies residues 1 to 17 (MQLLLALLALAYVAPST). An Alpha-carbonic anhydrase domain is found at 20 to 278 (SGWCYEIQTK…LGKRQVFKSH (259 aa)). 2 cysteine pairs are disulfide-bonded: Cys-23–Cys-35 and Cys-45–Cys-222. Residue His-87 is the Proton donor/acceptor of the active site. His-114 and His-116 together coordinate Zn(2+). The N-linked (GlcNAc...) asparagine glycan is linked to Asn-123. Residue His-139 coordinates Zn(2+). N-linked (GlcNAc...) asparagine glycosylation occurs at Asn-214. A substrate-binding site is contributed by 218 to 219 (TT). A lipid anchor (GPI-anchor amidated serine) is attached at Ser-277. Positions 278-305 (HAPGQLLSLPLPTLLVPTLTCLVANFLQ) are cleaved as a propeptide — removed in mature form.

Belongs to the alpha-carbonic anhydrase family. Interacts with SLC4A4. Zn(2+) serves as cofactor.

The protein resides in the cell membrane. The enzyme catalyses hydrogencarbonate + H(+) = CO2 + H2O. Its activity is regulated as follows. Inhibited by acetazolamide. Its function is as follows. Catalyzes the reversible hydration of carbon dioxide into bicarbonate and protons and thus is essential to maintaining intracellular and extracellular pH. May stimulate the sodium/bicarbonate transporter activity of SLC4A4 that acts in pH homeostasis. It is essential for acid overload removal from the retina and retina epithelium, and acid release in the choriocapillaris in the choroid. This is Carbonic anhydrase 4 (Ca4) from Mus musculus (Mouse).